The primary structure comprises 217 residues: Putative cobalt transport protein CbiM (217 aa).

Transmembrane regions (helical) follow at residues 8-28, 44-64, 74-94, 107-127, 139-161, and 181-201; these read LPPE…VYGA, LIAV…PSVT, GIAV…IVLL, TLGA…WIAF, VFAA…LALA, and IFAV…VMLV.

Belongs to the CbiM family. In terms of assembly, forms an energy-coupling factor (ECF) transporter complex composed of an ATP-binding protein (A component, CbiO), a transmembrane protein (T component, CbiQ) and 2 possible substrate-capture proteins (S components, CbiM and CbiN) of unknown stoichimetry.

The protein resides in the cell membrane. It participates in cofactor biosynthesis; adenosylcobalamin biosynthesis. In terms of biological role, part of the energy-coupling factor (ECF) transporter complex CbiMNOQ involved in cobalt import. In Archaeoglobus fulgidus (strain ATCC 49558 / DSM 4304 / JCM 9628 / NBRC 100126 / VC-16), this protein is Putative cobalt transport protein CbiM.